Consider the following 60-residue polypeptide: Cytotoxin 4 (60 aa).

4 disulfides stabilise this stretch: C3–C21, C14–C38, C42–C53, and C54–C59.

It belongs to the three-finger toxin family. Short-chain subfamily. Type IA cytotoxin sub-subfamily. Monomer in solution; Homodimer and oligomer in the presence of negatively charged lipids forming a pore with a size ranging between 20 and 30 Angstroms. Expressed by the venom gland.

It localises to the secreted. It is found in the target cell membrane. Shows cytolytic activity on many different cells by forming pore in lipid membranes. In vivo, increases heart rate or kills the animal by cardiac arrest. In addition, it binds to heparin with high affinity, interacts with Kv channel-interacting protein 1 (KCNIP1) in a calcium-independent manner, and binds to integrin alpha-V/beta-3 (ITGAV/ITGB3) with moderate affinity. The protein is Cytotoxin 4 of Naja mossambica (Mozambique spitting cobra).